Here is a 340-residue protein sequence, read N- to C-terminus: Biotin synthase (340 aa).

A Radical SAM core domain is found at 47-269 (SELQLSQLLS…VAVARIVCPK (223 aa)). Residues Cys62, Cys66, and Cys69 each contribute to the [4Fe-4S] cluster site. Positions 106, 137, 197, and 273 each coordinate [2Fe-2S] cluster.

It belongs to the radical SAM superfamily. Biotin synthase family. Homodimer. It depends on [4Fe-4S] cluster as a cofactor. [2Fe-2S] cluster is required as a cofactor.

The catalysed reaction is (4R,5S)-dethiobiotin + (sulfur carrier)-SH + 2 reduced [2Fe-2S]-[ferredoxin] + 2 S-adenosyl-L-methionine = (sulfur carrier)-H + biotin + 2 5'-deoxyadenosine + 2 L-methionine + 2 oxidized [2Fe-2S]-[ferredoxin]. It functions in the pathway cofactor biosynthesis; biotin biosynthesis; biotin from 7,8-diaminononanoate: step 2/2. Functionally, catalyzes the conversion of dethiobiotin (DTB) to biotin by the insertion of a sulfur atom into dethiobiotin via a radical-based mechanism. The protein is Biotin synthase of Caulobacter sp. (strain K31).